A 215-amino-acid chain; its full sequence is Adenylate kinase (215 aa).

Gly-10–Thr-15 is a binding site for ATP. The tract at residues Ser-30 to Val-59 is NMP. Residues Thr-31, Arg-36, Glu-57 to Val-59, Gly-85 to Arg-88, and Gln-92 each bind AMP. The interval Gly-126–Asp-163 is LID. Position 127 (Arg-127) interacts with ATP. Cys-130, Cys-133, Cys-150, and Cys-153 together coordinate Zn(2+). Residues Arg-160 and Arg-171 each contribute to the AMP site. Position 199 (Gly-199) interacts with ATP.

Belongs to the adenylate kinase family. In terms of assembly, monomer.

It localises to the cytoplasm. It catalyses the reaction AMP + ATP = 2 ADP. It functions in the pathway purine metabolism; AMP biosynthesis via salvage pathway; AMP from ADP: step 1/1. Its function is as follows. Catalyzes the reversible transfer of the terminal phosphate group between ATP and AMP. Plays an important role in cellular energy homeostasis and in adenine nucleotide metabolism. The polypeptide is Adenylate kinase (Thermodesulfovibrio yellowstonii (strain ATCC 51303 / DSM 11347 / YP87)).